The chain runs to 101 residues: Cilia- and flagella-associated protein 141 (101 aa).

As to quaternary structure, microtubule inner protein component of sperm flagellar doublet microtubules. In terms of tissue distribution, expressed in trachea multiciliated cells.

Its subcellular location is the cytoplasm. It localises to the cytoskeleton. The protein localises to the cilium axoneme. The protein resides in the flagellum axoneme. Microtubule inner protein (MIP) part of the dynein-decorated doublet microtubules (DMTs) in cilia axoneme, which is required for motile cilia beating. The polypeptide is Cilia- and flagella-associated protein 141 (Bos taurus (Bovine)).